Consider the following 332-residue polypeptide: Super small secreted glycoprotein (332 aa).

The signal sequence occupies residues 1 to 33 (MGSGYQLLQLPRERFRKTSFLVWVIILFQRAIS). N41 is a glycosylation site (N-linked (GlcNAc...) asparagine; by host). Cystine bridges form between C109-C136 and C122-C148. 4 N-linked (GlcNAc...) asparagine; by host glycosylation sites follow: N205, N239, N258, and N269.

This sequence belongs to the filoviruses glycoprotein family.

It is found in the secreted. In Homo sapiens (Human), this protein is Super small secreted glycoprotein (GP).